A 464-amino-acid chain; its full sequence is Ubiquinone biosynthesis monooxygenase COQ6, mitochondrial (464 aa).

The transit peptide at 1 to 24 (MRCLGGSSLSRLLRMLSQSQGRAL) directs the protein to the mitochondrion.

This sequence belongs to the UbiH/COQ6 family. In terms of assembly, component of a multi-subunit COQ enzyme complex, composed of at least coq3, coq4, coq5, coq6, coq7 and coq9. Interacts with coq8b and coq7. The cofactor is FAD.

It is found in the mitochondrion inner membrane. The protein localises to the golgi apparatus. It localises to the cell projection. It catalyses the reaction a 4-hydroxy-3-(all-trans-polyprenyl)benzoate + 2 reduced [2Fe-2S]-[ferredoxin] + O2 + 2 H(+) = a 3,4-dihydroxy-5-(all-trans-polyprenyl)benzoate + 2 oxidized [2Fe-2S]-[ferredoxin] + H2O. The catalysed reaction is a 2-methoxy-6-(all-trans-polyprenyl)phenol + 2 reduced [2Fe-2S]-[ferredoxin] + O2 + 2 H(+) = a 2-methoxy-6-(all-trans-polyprenyl)benzene-1,4-diol + 2 oxidized [2Fe-2S]-[ferredoxin] + H2O. The protein operates within cofactor biosynthesis; ubiquinone biosynthesis. Functionally, FAD-dependent monooxygenase required for two non-consecutive steps during ubiquinone biosynthesis. Required for the C5-ring hydroxylation during ubiquinone biosynthesis by catalyzing the hydroxylation of 4-hydroxy-3-(all-trans-polyprenyl)benzoic acid to 3,4-dihydroxy-5-(all-trans-polyprenyl)benzoic acid. Also acts downstream of coq4, for the C1-hydroxylation during ubiquinone biosynthesis by catalyzing the hydroxylation of 2-methoxy-6-(all-trans-polyprenyl)phenol to 2-methoxy-6-(all-trans-polyprenyl)benzene-1,4-diol. The electrons required for the hydroxylation reaction are funneled indirectly to coq6 from NADPH via a ferredoxin/ferredoxin reductase system. This Xenopus tropicalis (Western clawed frog) protein is Ubiquinone biosynthesis monooxygenase COQ6, mitochondrial.